Here is a 366-residue protein sequence, read N- to C-terminus: Putative zinc metalloprotease slr1821 (366 aa).

Residue histidine 20 participates in Zn(2+) binding. Glutamate 21 is a catalytic residue. Histidine 24 is a binding site for Zn(2+). 3 helical membrane-spanning segments follow: residues 95 to 115, 293 to 313, and 325 to 345; these read AIVI…LLIG, AVIN…FLLI, and FQMG…VFLI. In terms of domain architecture, PDZ spans 106-188; it reads LVFAYFLLIG…VPITVEVQRG (83 aa).

This sequence belongs to the peptidase M50B family. Zn(2+) is required as a cofactor.

It localises to the cell inner membrane. The polypeptide is Putative zinc metalloprotease slr1821 (Synechocystis sp. (strain ATCC 27184 / PCC 6803 / Kazusa)).